The sequence spans 1097 residues: DNA-directed RNA polymerase subunit beta (1097 aa).

The tract at residues 1072–1097 (QDVNPRRSTPSRPTYESLGVADYDED) is disordered.

This sequence belongs to the RNA polymerase beta chain family. As to quaternary structure, in cyanobacteria the RNAP catalytic core is composed of 2 alpha, 1 beta, 1 beta', 1 gamma and 1 omega subunit. When a sigma factor is associated with the core the holoenzyme is formed, which can initiate transcription.

The catalysed reaction is RNA(n) + a ribonucleoside 5'-triphosphate = RNA(n+1) + diphosphate. DNA-dependent RNA polymerase catalyzes the transcription of DNA into RNA using the four ribonucleoside triphosphates as substrates. The sequence is that of DNA-directed RNA polymerase subunit beta from Parasynechococcus marenigrum (strain WH8102).